The chain runs to 1080 residues: Histone deacetylase 4 (1080 aa).

Disordered regions lie at residues Met1–Val25, Lys132–Val165, and Thr205–Glu312. Residues Lys132–Glu162 are compositionally biased toward basic and acidic residues. A compositionally biased stretch (polar residues) spans Thr205–Tyr224. Basic and acidic residues-rich tracts occupy residues Asp233–Ala244 and Lys258–Gly273. Residues Ser289–Glu312 show a composition bias toward low complexity. The PxLPxI/L signature appears at Pro348–Ile353. 3 disordered regions span residues Lys506–Glu527, Glu558–Gln579, and Pro622–Pro646. Residues Glu509–Glu527 are compositionally biased toward basic and acidic residues. The segment covering Ile560–Gln571 has biased composition (acidic residues). Positions Arg625–Met637 are enriched in polar residues. The tract at residues Gly651 to Leu1080 is histone deacetylase. Zn(2+)-binding residues include Cys663, Cys665, His671, and Cys747. Residue His799 is part of the active site. Residues Met1055–Leu1080 form a disordered region.

It belongs to the histone deacetylase family. HD type 2 subfamily.

It is found in the nucleus. It catalyses the reaction N(6)-acetyl-L-lysyl-[histone] + H2O = L-lysyl-[histone] + acetate. Functionally, responsible for the deacetylation of lysine residues on the N-terminal part of the core histones (H2A, H2B, H3 and H4). Histone deacetylation gives a tag for epigenetic repression and plays an important role in transcriptional regulation, cell cycle progression and developmental events. Histone deacetylases act via the formation of large multiprotein complexes. This Gallus gallus (Chicken) protein is Histone deacetylase 4 (HDAC4).